A 702-amino-acid chain; its full sequence is Ribosomal RNA large subunit methyltransferase K/L (702 aa).

Residues 43–154 (LVYQSLMWSR…KETASIALDL (112 aa)) form the THUMP domain.

Belongs to the methyltransferase superfamily. RlmKL family.

The protein localises to the cytoplasm. The catalysed reaction is guanosine(2445) in 23S rRNA + S-adenosyl-L-methionine = N(2)-methylguanosine(2445) in 23S rRNA + S-adenosyl-L-homocysteine + H(+). The enzyme catalyses guanosine(2069) in 23S rRNA + S-adenosyl-L-methionine = N(2)-methylguanosine(2069) in 23S rRNA + S-adenosyl-L-homocysteine + H(+). Specifically methylates the guanine in position 2445 (m2G2445) and the guanine in position 2069 (m7G2069) of 23S rRNA. This Shigella boydii serotype 18 (strain CDC 3083-94 / BS512) protein is Ribosomal RNA large subunit methyltransferase K/L.